The primary structure comprises 396 residues: Probable mannan endo-1,4-beta-mannosidase A-2 (396 aa).

The N-terminal stretch at 1–21 (MKVPRLLLALGGLASIHIASA) is a signal peptide. Residue tryptophan 99 coordinates substrate. N-linked (GlcNAc...) asparagine glycosylation occurs at asparagine 120. Asparagine 212 contacts substrate. The Proton donor role is filled by glutamate 213. An N-linked (GlcNAc...) asparagine glycan is attached at asparagine 270. Tyrosine 288 contacts substrate. Glutamate 321 acts as the Nucleophile in catalysis. Tryptophan 351 serves as a coordination point for substrate.

It belongs to the glycosyl hydrolase 5 (cellulase A) family.

Its subcellular location is the secreted. It catalyses the reaction Random hydrolysis of (1-&gt;4)-beta-D-mannosidic linkages in mannans, galactomannans and glucomannans.. In terms of biological role, endo-1,4-mannanase, a crucial enzyme for depolymerization of seed galactomannans and wood galactoglucomannans. The sequence is that of Probable mannan endo-1,4-beta-mannosidase A-2 (manA-2) from Aspergillus terreus (strain NIH 2624 / FGSC A1156).